Here is a 205-residue protein sequence, read N- to C-terminus: Octanoyltransferase (205 aa).

The 176-residue stretch at 30–205 folds into the BPL/LPL catalytic domain; that stretch reads NLSDELVWLL…ILKQEFHKIF (176 aa). Residues 68 to 75, 140 to 142, and 153 to 155 each bind substrate; these read RGGKYTYH, AFG, and GIA. C171 (acyl-thioester intermediate) is an active-site residue.

The protein belongs to the LipB family.

The protein resides in the cytoplasm. The enzyme catalyses octanoyl-[ACP] + L-lysyl-[protein] = N(6)-octanoyl-L-lysyl-[protein] + holo-[ACP] + H(+). Its pathway is protein modification; protein lipoylation via endogenous pathway; protein N(6)-(lipoyl)lysine from octanoyl-[acyl-carrier-protein]: step 1/2. Functionally, catalyzes the transfer of endogenously produced octanoic acid from octanoyl-acyl-carrier-protein onto the lipoyl domains of lipoate-dependent enzymes. Lipoyl-ACP can also act as a substrate although octanoyl-ACP is likely to be the physiological substrate. The protein is Octanoyltransferase of Wolbachia pipientis subsp. Culex pipiens (strain wPip).